The chain runs to 347 residues: Peptidoglycan recognition protein 3 (347 aa).

The signal sequence occupies residues 1–26 (MLVSWDHPKMLPRLLGFLALSLLACG). N-acetylmuramoyl-L-alanine amidase domains are found at residues 77–185 (LQSQ…KACP) and 206–328 (PAKF…VSNI). Asn120 carries N-linked (GlcNAc...) asparagine glycosylation. Disulfide bonds link Cys184–Cys306, Cys200–Cys244, and Cys220–Cys226. Peptidoglycan-binding residues include His237 and Tyr248. The interval 270 to 275 (HTYGYN) is interaction with murein.

The protein belongs to the N-acetylmuramoyl-L-alanine amidase 2 family. Monomer. Homodimer; disulfide-linked. Heterodimer with PGLYRP4; disulfide-linked. As to expression, detected in lung, spleen and stomach, and at low levels in eye, heart, thymus and testis.

It is found in the secreted. Functionally, pattern receptor that binds to murein peptidoglycans (PGN) of Gram-positive bacteria. Has bactericidal activity towards Gram-positive bacteria. May kill Gram-positive bacteria by interfering with peptidoglycan biosynthesis. Also binds to Gram-negative bacteria, and has bacteriostatic activity towards Gram-negative bacteria. Plays a role in innate immunity. The chain is Peptidoglycan recognition protein 3 (Pglyrp3) from Mus musculus (Mouse).